A 580-amino-acid chain; its full sequence is Probable inositol transporter 3 (580 aa).

12 consecutive transmembrane segments (helical) span residues 34-54 (GIGG…LLYI), 69-89 (EIIV…GGWY), 104-124 (VLFL…VIIL), 127-147 (LLVG…ISEM), 161-181 (GLLI…FVHT), 187-207 (WMLG…LTLP), 289-309 (FVGI…AGYA), 316-336 (ALAL…MMFV), 344-364 (LMII…AVFN), 455-475 (FGYL…PGMG), 493-513 (LAGG…SETF), and 524-544 (GTFL…WLLV).

It belongs to the major facilitator superfamily. Sugar transporter (TC 2.A.1.1) family.

The protein localises to the membrane. Functionally, plasma membrane inositol-proton symporter. This is Probable inositol transporter 3 (INT3) from Arabidopsis thaliana (Mouse-ear cress).